We begin with the raw amino-acid sequence, 435 residues long: D-inositol 3-phosphate glycosyltransferase (435 aa).

H16 serves as a coordination point for 1D-myo-inositol 3-phosphate. UDP-N-acetyl-alpha-D-glucosamine is bound by residues 22–23 (QP) and G30. 1D-myo-inositol 3-phosphate contacts are provided by residues 27–32 (DAGGMN), K85, Y118, T142, and R162. Residues R237, K242, and V303 each coordinate UDP-N-acetyl-alpha-D-glucosamine. Mg(2+) is bound by residues Y312, R313, and A315. The UDP-N-acetyl-alpha-D-glucosamine site is built by E325 and E333. T339 lines the Mg(2+) pocket.

Belongs to the glycosyltransferase group 1 family. MshA subfamily. As to quaternary structure, homodimer.

It catalyses the reaction 1D-myo-inositol 3-phosphate + UDP-N-acetyl-alpha-D-glucosamine = 1D-myo-inositol 2-acetamido-2-deoxy-alpha-D-glucopyranoside 3-phosphate + UDP + H(+). In terms of biological role, catalyzes the transfer of a N-acetyl-glucosamine moiety to 1D-myo-inositol 3-phosphate to produce 1D-myo-inositol 2-acetamido-2-deoxy-glucopyranoside 3-phosphate in the mycothiol biosynthesis pathway. In Kineococcus radiotolerans (strain ATCC BAA-149 / DSM 14245 / SRS30216), this protein is D-inositol 3-phosphate glycosyltransferase.